The primary structure comprises 364 residues: F-box/LRR-repeat protein At1g55660 (364 aa).

Positions 52 to 98 (MDKISQLPDELLVKVLSFLSTKDAVSTSILSMRWKSLWMWLPKLEYN) constitute an F-box domain. LRR repeat units lie at residues 158–179 (NVRELSLKLFNFAELPTKLPKS), 185–206 (SIVILKLKDEILVDVPRKVCLP), 207–228 (SLKTLFLGRVTYSDANSLHRLL), 233–254 (VLEDLVMERDKIDNLGKLSVIV), 256–277 (SLQRLTLKMSRPCHLDGLKMNS), and 279–300 (SLKYLKVIDERLESDSDDESDS).

The chain is F-box/LRR-repeat protein At1g55660 from Arabidopsis thaliana (Mouse-ear cress).